Reading from the N-terminus, the 99-residue chain is MSWYRWDGEDLILACHLQPKASKDEFAGLHGERLKIRLTAPPVEGKANAHLLAFLAGVFGVPKSQVSLESGESNRQKRVRIRRPRQLPALPGLAPRPDA.

Residues 66-99 (VSLESGESNRQKRVRIRRPRQLPALPGLAPRPDA) are disordered. Residues 76 to 85 (QKRVRIRRPR) show a composition bias toward basic residues.

The protein belongs to the UPF0235 family.

The polypeptide is UPF0235 protein Avin_03050 (Azotobacter vinelandii (strain DJ / ATCC BAA-1303)).